Consider the following 534-residue polypeptide: Blue-light-activated protein (534 aa).

The region spanning 20 to 93 is the PAS domain; sequence GKDIFFAAVE…QSIRDAIDQR (74 aa). Position 70 is an S-4a-FMN cysteine (Cys-70). Positions 94 to 148 constitute a PAC domain; that stretch reads VDISTEILNYRKDGSSFWNALFISPVYNDAGELIYFFASQLDISRRRDAEEALRQ. Residues 161–390 form the Histidine kinase domain; the sequence is GIAHDFNNLL…TLRLYFPVDE (230 aa). His-164 carries the post-translational modification Phosphohistidine; by autocatalysis. Residues 411-527 enclose the Response regulatory domain; that stretch reads RILIVEDRPD…DLARKVRQVL (117 aa). Asp-461 is modified (4-aspartylphosphate).

Post-translationally, FMN binds covalently to cysteine after exposure to blue light and this bond is spontaneously broken in the dark.

It carries out the reaction ATP + protein L-histidine = ADP + protein N-phospho-L-histidine.. Its function is as follows. Photosensitive kinase and response regulator that is involved in increased bacterial virulence upon exposure to light. In Pseudomonas syringae pv. syringae (strain B728a), this protein is Blue-light-activated protein.